Consider the following 429-residue polypeptide: Glutamate-1-semialdehyde 2,1-aminomutase 2 (429 aa).

An N6-(pyridoxal phosphate)lysine modification is found at K268.

The protein belongs to the class-III pyridoxal-phosphate-dependent aminotransferase family. HemL subfamily. Homodimer. Requires pyridoxal 5'-phosphate as cofactor.

The protein localises to the cytoplasm. The catalysed reaction is (S)-4-amino-5-oxopentanoate = 5-aminolevulinate. It participates in porphyrin-containing compound metabolism; protoporphyrin-IX biosynthesis; 5-aminolevulinate from L-glutamyl-tRNA(Glu): step 2/2. The protein is Glutamate-1-semialdehyde 2,1-aminomutase 2 of Bacillus thuringiensis (strain Al Hakam).